The primary structure comprises 108 residues: uncharacterized protein (108 aa).

The segment at 81–108 (FKCLDSPPPVPPSSSQGEDEENTVDSQY) is disordered. The span at 97–108 (GEDEENTVDSQY) shows a compositional bias: acidic residues.

This is an uncharacterized protein from Saccharomyces cerevisiae (strain ATCC 204508 / S288c) (Baker's yeast).